The chain runs to 225 residues: Protein-L-isoaspartate O-methyltransferase (225 aa).

S63 is a catalytic residue.

It belongs to the methyltransferase superfamily. L-isoaspartyl/D-aspartyl protein methyltransferase family.

It localises to the cytoplasm. The catalysed reaction is [protein]-L-isoaspartate + S-adenosyl-L-methionine = [protein]-L-isoaspartate alpha-methyl ester + S-adenosyl-L-homocysteine. Functionally, catalyzes the methyl esterification of L-isoaspartyl residues in peptides and proteins that result from spontaneous decomposition of normal L-aspartyl and L-asparaginyl residues. It plays a role in the repair and/or degradation of damaged proteins. The polypeptide is Protein-L-isoaspartate O-methyltransferase (Staphylothermus marinus (strain ATCC 43588 / DSM 3639 / JCM 9404 / F1)).